We begin with the raw amino-acid sequence, 215 residues long: GTP-binding protein YPT6 (215 aa).

17–24 provides a ligand contact to GTP; that stretch reads GEQGVGKT. Residues 39–47 carry the Effector region motif; it reads YQATIGIDF. Residues 65–69 and 124–127 each bind GTP; these read DTAGQ and NKSD. Residues 178–196 show a composition bias toward polar residues; sequence NSESTPLDSENANSANQNK. A disordered region spans residues 178–215; sequence NSESTPLDSENANSANQNKPGVIDISTAEEQEQSACQC. Residues Cys213 and Cys215 are each lipidated (S-geranylgeranyl cysteine). Cys215 carries the post-translational modification Cysteine methyl ester.

Belongs to the small GTPase superfamily. Rab family. In terms of assembly, interacts with YIF1, YIP3 and YIP4.

Its subcellular location is the cell membrane. Its function is as follows. Protein transport. Might participate in post-Golgi transport. The protein is GTP-binding protein YPT6 (YPT6) of Saccharomyces cerevisiae (strain ATCC 204508 / S288c) (Baker's yeast).